Reading from the N-terminus, the 469-residue chain is 3-isopropylmalate dehydratase large subunit (469 aa).

Positions 350, 410, and 413 each coordinate [4Fe-4S] cluster.

Belongs to the aconitase/IPM isomerase family. LeuC type 1 subfamily. Heterodimer of LeuC and LeuD. Requires [4Fe-4S] cluster as cofactor.

The enzyme catalyses (2R,3S)-3-isopropylmalate = (2S)-2-isopropylmalate. Its pathway is amino-acid biosynthesis; L-leucine biosynthesis; L-leucine from 3-methyl-2-oxobutanoate: step 2/4. In terms of biological role, catalyzes the isomerization between 2-isopropylmalate and 3-isopropylmalate, via the formation of 2-isopropylmaleate. This Sinorhizobium fredii (strain NBRC 101917 / NGR234) protein is 3-isopropylmalate dehydratase large subunit.